The primary structure comprises 196 residues: Prefoldin subunit 3 (196 aa).

Position 2 is an N-acetylalanine (alanine 2). N6-acetyllysine is present on lysine 58.

This sequence belongs to the prefoldin subunit alpha family. In terms of assembly, heterohexamer of two PFD-alpha type and four PFD-beta type subunits. Binds to the C-terminal part of VHL.

It localises to the cytoplasm. It is found in the nucleus. Binds specifically to cytosolic chaperonin (c-CPN) and transfers target proteins to it. Binds to nascent polypeptide chain and promotes folding in an environment in which there are many competing pathways for nonnative proteins. The chain is Prefoldin subunit 3 (Vbp1) from Mus musculus (Mouse).